We begin with the raw amino-acid sequence, 916 residues long: Internalin J (916 aa).

A signal peptide spans 1–25; that stretch reads MKTSKIIIASLVSLTLVSNPILTFA. 14 LRR repeats span residues 94-115, 116-136, 137-157, 158-179, 180-200, 201-221, 222-243, 244-263, 264-284, 285-306, 316-325, 338-357, 359-368, and 380-402; these read TLTS…EKLT, GLTK…SQNT, NLTY…TPLT, KLTY…QNPL, LTYL…HNTQ, LTEL…TPQT, QLTT…QNKL, LNRL…NQNI, QLTF…TPLT, QLTY…TLSK, DLLEIDLTHN, KIKE…DCQA, GITELDLSQN, and ELTK…NAHI. MucBP domains are found at residues 506–568, 576–638, 646–708, 717–779, and 787–849; these read PIKG…SQSV, IVAA…SQTV, IVAA…AQTV, and APEK…SQTV. Positions 862-888 are disordered; sequence PLPDKKTTKPSNLKTTEVKKASDTLPK. The LPXTG sorting signal signature appears at 886–890; it reads LPKTG. The residue at position 889 (Thr-889) is a Pentaglycyl murein peptidoglycan amidated threonine. Residues 890-916 constitute a propeptide, removed by sortase; it reads GDSTPWKSALLGVFLSSTALVIWKKKK.

It belongs to the internalin family.

Its subcellular location is the secreted. The protein resides in the cell wall. Its function is as follows. Involved in several steps of L.monocytogenes infection, probably improves adhesin to host cells. This chain is Internalin J (inlJ), found in Listeria monocytogenes serotype 4b (strain F2365).